A 249-amino-acid polypeptide reads, in one-letter code: MAGHSKWANIKHRKAKQDASRGKVFTKYIREIVTAAKLGGADPASNPRLRAVVEKALSVNMTRDTINRAIQRGVGGEDNDDLKEVTYEGYGVGGVAVLVETMTDNLNRTVPDVRHCFSKTNGNLGTAGSVAYLFTKRGEITFDDVSLEDKIMDVALEAGAEDIEVSEDEILVITSPETFGEVQDALAAAGLKSDNAEVVMSPSTKAEITDIDQAKQVMKLIDMLEDLDDVQNVYTNVEFSDEVLAQLDA.

Belongs to the TACO1 family.

It localises to the cytoplasm. The polypeptide is Probable transcriptional regulatory protein AB57_1731 (Acinetobacter baumannii (strain AB0057)).